A 1326-amino-acid polypeptide reads, in one-letter code: Paired amphipathic helix protein Sin3-like 4 (1326 aa).

PAH domains lie at 8–78 (QKLT…LPKG), 95–165 (KPVE…LPDT), and 292–367 (IPSS…LAQC). Disordered stretches follow at residues 272-299 (DDDSAEMSDQAREGDKFSGAIPSSSTYD), 715-812 (VPSR…RAET), 844-864 (SVAGLSNSNPKPALTSGTEEL), and 927-1000 (SKSK…EGDM). Basic and acidic residues predominate over residues 721 to 737 (GAEDREDAVKSTNHDRE). 4 stretches are compositionally biased toward polar residues: residues 744-757 (SPQNGASIANSMRS), 781-805 (SSKTSDALLSCDNTQNDKMPKNLTT), 844-861 (SVAGLSNSNPKPALTSGT), and 942-961 (PRSSDGSGNTSHNGDVSGTD). Positions 967 to 981 (DCYREDDIDHNKVES) are enriched in basic and acidic residues.

The protein resides in the nucleus. Its function is as follows. Acts as a transcriptional repressor. Plays roles in regulating gene expression and genome stability. The sequence is that of Paired amphipathic helix protein Sin3-like 4 (SNL4) from Arabidopsis thaliana (Mouse-ear cress).